The following is a 218-amino-acid chain: ATP-dependent dethiobiotin synthetase BioD (218 aa).

10–15 (NAGKTT) lines the ATP pocket. Position 14 (Thr14) interacts with Mg(2+). Residue Lys35 is part of the active site. Thr39 provides a ligand contact to substrate. Position 116 (Glu116) interacts with Mg(2+). Residues 116–119 (EGAG) and 176–177 (LR) each bind ATP.

Belongs to the dethiobiotin synthetase family. As to quaternary structure, homodimer. Mg(2+) is required as a cofactor.

The protein resides in the cytoplasm. The catalysed reaction is (7R,8S)-7,8-diammoniononanoate + CO2 + ATP = (4R,5S)-dethiobiotin + ADP + phosphate + 3 H(+). It participates in cofactor biosynthesis; biotin biosynthesis; biotin from 7,8-diaminononanoate: step 1/2. In terms of biological role, catalyzes a mechanistically unusual reaction, the ATP-dependent insertion of CO2 between the N7 and N8 nitrogen atoms of 7,8-diaminopelargonic acid (DAPA, also called 7,8-diammoniononanoate) to form a ureido ring. In Helicobacter pylori (strain J99 / ATCC 700824) (Campylobacter pylori J99), this protein is ATP-dependent dethiobiotin synthetase BioD.